Consider the following 240-residue polypeptide: UDP-2,3-diacylglucosamine hydrolase (240 aa).

D9, H11, D43, N81, and H116 together coordinate Mn(2+). 81-82 (NR) is a substrate binding site. Substrate-binding residues include D124, S162, K166, K169, and H197. Mn(2+) contacts are provided by H197 and H199.

The protein belongs to the LpxH family. Requires Mn(2+) as cofactor.

It localises to the cell inner membrane. It carries out the reaction UDP-2-N,3-O-bis[(3R)-3-hydroxytetradecanoyl]-alpha-D-glucosamine + H2O = 2-N,3-O-bis[(3R)-3-hydroxytetradecanoyl]-alpha-D-glucosaminyl 1-phosphate + UMP + 2 H(+). It functions in the pathway glycolipid biosynthesis; lipid IV(A) biosynthesis; lipid IV(A) from (3R)-3-hydroxytetradecanoyl-[acyl-carrier-protein] and UDP-N-acetyl-alpha-D-glucosamine: step 4/6. Hydrolyzes the pyrophosphate bond of UDP-2,3-diacylglucosamine to yield 2,3-diacylglucosamine 1-phosphate (lipid X) and UMP by catalyzing the attack of water at the alpha-P atom. Involved in the biosynthesis of lipid A, a phosphorylated glycolipid that anchors the lipopolysaccharide to the outer membrane of the cell. The protein is UDP-2,3-diacylglucosamine hydrolase of Neisseria meningitidis serogroup C (strain 053442).